We begin with the raw amino-acid sequence, 285 residues long: Eukaryotic translation initiation factor 3 subunit F-2 (285 aa).

An MPN domain is found at 11-145 (VYLKPLVFFQ…TRLYCAVEMG (135 aa)).

It belongs to the eIF-3 subunit F family. In terms of assembly, component of the eukaryotic translation initiation factor 3 (eIF-3) complex. The eIF-3 complex interacts with pix.

It localises to the cytoplasm. Its function is as follows. Component of the eukaryotic translation initiation factor 3 (eIF-3) complex, which is involved in protein synthesis of a specialized repertoire of mRNAs and, together with other initiation factors, stimulates binding of mRNA and methionyl-tRNAi to the 40S ribosome. The eIF-3 complex specifically targets and initiates translation of a subset of mRNAs involved in cell proliferation. This is Eukaryotic translation initiation factor 3 subunit F-2 from Drosophila melanogaster (Fruit fly).